Reading from the N-terminus, the 350-residue chain is S-adenosylmethionine:tRNA ribosyltransferase-isomerase (350 aa).

The protein belongs to the QueA family. In terms of assembly, monomer.

It localises to the cytoplasm. The catalysed reaction is 7-aminomethyl-7-carbaguanosine(34) in tRNA + S-adenosyl-L-methionine = epoxyqueuosine(34) in tRNA + adenine + L-methionine + 2 H(+). It functions in the pathway tRNA modification; tRNA-queuosine biosynthesis. Transfers and isomerizes the ribose moiety from AdoMet to the 7-aminomethyl group of 7-deazaguanine (preQ1-tRNA) to give epoxyqueuosine (oQ-tRNA). This is S-adenosylmethionine:tRNA ribosyltransferase-isomerase from Bacillus cereus (strain B4264).